We begin with the raw amino-acid sequence, 147 residues long: Nucleoside diphosphate kinase (147 aa).

Residues Lys9, Phe57, Arg85, Thr91, Arg102, and Asn112 each contribute to the ATP site. Catalysis depends on His115, which acts as the Pros-phosphohistidine intermediate.

This sequence belongs to the NDK family. As to quaternary structure, homotetramer. Mg(2+) serves as cofactor.

It localises to the cytoplasm. The enzyme catalyses a 2'-deoxyribonucleoside 5'-diphosphate + ATP = a 2'-deoxyribonucleoside 5'-triphosphate + ADP. It catalyses the reaction a ribonucleoside 5'-diphosphate + ATP = a ribonucleoside 5'-triphosphate + ADP. Major role in the synthesis of nucleoside triphosphates other than ATP. The ATP gamma phosphate is transferred to the NDP beta phosphate via a ping-pong mechanism, using a phosphorylated active-site intermediate. The chain is Nucleoside diphosphate kinase from Kosmotoga olearia (strain ATCC BAA-1733 / DSM 21960 / TBF 19.5.1).